A 651-amino-acid chain; its full sequence is DNA ligase (651 aa).

NAD(+)-binding positions include 32–36 (DAEYD), 75–76 (SL), and E106. K108 acts as the N6-AMP-lysine intermediate in catalysis. R129, E164, K271, and K295 together coordinate NAD(+). Positions 389, 392, 405, and 411 each coordinate Zn(2+). Positions 575 to 651 (SSDSFLNNKI…LDEEQWNRLC (77 aa)) constitute a BRCT domain.

It belongs to the NAD-dependent DNA ligase family. LigA subfamily. Requires Mg(2+) as cofactor. Mn(2+) is required as a cofactor.

The enzyme catalyses NAD(+) + (deoxyribonucleotide)n-3'-hydroxyl + 5'-phospho-(deoxyribonucleotide)m = (deoxyribonucleotide)n+m + AMP + beta-nicotinamide D-nucleotide.. Functionally, DNA ligase that catalyzes the formation of phosphodiester linkages between 5'-phosphoryl and 3'-hydroxyl groups in double-stranded DNA using NAD as a coenzyme and as the energy source for the reaction. It is essential for DNA replication and repair of damaged DNA. The polypeptide is DNA ligase (Wolbachia pipientis subsp. Culex pipiens (strain wPip)).